We begin with the raw amino-acid sequence, 394 residues long: Flavin-dependent monooxygenase, oxygenase subunit HsaA (394 aa).

FMN contacts are provided by residues Trp-84, 118 to 120, 141 to 143, Arg-263, 346 to 347, and 368 to 369; these read SSY, WSS, AT, and HA.

The protein belongs to the HpaH/HsaA monooxygenase family. As to quaternary structure, homotetramer under anaerobic conditions. HsaAB monooxygenase consists of an oxygenase component HsaA and a reductase component HsaB.

The enzyme catalyses 3-hydroxy-9,10-secoandrosta-1,3,5(10)-triene-9,17-dione + FMNH2 + O2 = 3,4-dihydroxy-9,10-secoandrosta-1,3,5(10)-triene-9,17-dione + FMN + H2O + H(+). It functions in the pathway lipid metabolism; steroid biosynthesis. In terms of biological role, catalyzes the o-hydroxylation of 3-hydroxy-9,10-secoandrosta-1,3,5(10)-triene-9,17-dione (3-HSA) to 3,4-dihydroxy-9,10-secoandrosta-1,3,5(10)-triene-9,17-dione (3,4-DHSA) in the catabolism of cholesterol. This is Flavin-dependent monooxygenase, oxygenase subunit HsaA from Mycobacterium tuberculosis (strain CDC 1551 / Oshkosh).